The chain runs to 33 residues: Photosystem II reaction center protein Psb30 (33 aa).

Residues 5–25 (VIAQLASLALIIVLGPLVIGL) traverse the membrane as a helical segment.

This sequence belongs to the Psb30/Ycf12 family. PSII is composed of 1 copy each of membrane proteins PsbA, PsbB, PsbC, PsbD, PsbE, PsbF, PsbH, PsbI, PsbJ, PsbK, PsbL, PsbM, PsbT, PsbX, PsbY, PsbZ, Psb30/Ycf12, peripheral proteins of the oxygen-evolving complex and a large number of cofactors. It forms dimeric complexes.

Its subcellular location is the plastid. It localises to the chloroplast thylakoid membrane. Functionally, a core subunit of photosystem II (PSII), probably helps stabilize the reaction center. The polypeptide is Photosystem II reaction center protein Psb30 (Chara vulgaris (Common stonewort)).